A 174-amino-acid chain; its full sequence is RNA pyrophosphohydrolase (174 aa).

The Nudix hydrolase domain occupies G6–K149. The Nudix box motif lies at G38 to G59.

This sequence belongs to the Nudix hydrolase family. RppH subfamily. Requires a divalent metal cation as cofactor.

In terms of biological role, accelerates the degradation of transcripts by removing pyrophosphate from the 5'-end of triphosphorylated RNA, leading to a more labile monophosphorylated state that can stimulate subsequent ribonuclease cleavage. The protein is RNA pyrophosphohydrolase of Photobacterium profundum (strain SS9).